Consider the following 232-residue polypeptide: Leucyl/phenylalanyl-tRNA--protein transferase (232 aa).

This sequence belongs to the L/F-transferase family.

The protein localises to the cytoplasm. It carries out the reaction N-terminal L-lysyl-[protein] + L-leucyl-tRNA(Leu) = N-terminal L-leucyl-L-lysyl-[protein] + tRNA(Leu) + H(+). The enzyme catalyses N-terminal L-arginyl-[protein] + L-leucyl-tRNA(Leu) = N-terminal L-leucyl-L-arginyl-[protein] + tRNA(Leu) + H(+). It catalyses the reaction L-phenylalanyl-tRNA(Phe) + an N-terminal L-alpha-aminoacyl-[protein] = an N-terminal L-phenylalanyl-L-alpha-aminoacyl-[protein] + tRNA(Phe). Functions in the N-end rule pathway of protein degradation where it conjugates Leu, Phe and, less efficiently, Met from aminoacyl-tRNAs to the N-termini of proteins containing an N-terminal arginine or lysine. The polypeptide is Leucyl/phenylalanyl-tRNA--protein transferase (Nitrosospira multiformis (strain ATCC 25196 / NCIMB 11849 / C 71)).